Consider the following 739-residue polypeptide: Photosystem I P700 chlorophyll a apoprotein A1 (739 aa).

The next 8 helical transmembrane spans lie at 61–84 (IFSAHFGHLAVVFVWLSGMYFHGA), 147–170 (LYVTAIGGLVMAALMVFAGWFHYH), 186–210 (MNHHLSVLLGCGSLGWTGHLIHVSL), 281–299 (VAHHHLAIAVLFIIAGHMY), 336–359 (WHAQLAVNLALLGSLTIVIAHHMY), 375–401 (LSLFTHHTWIGGFLIVGAGAHGAIFMV), 423–445 (AIISHLNWVCIFLGFHSFGLYIH), and 520–538 (FMVHHIHAFTIHVTVLILL). The [4Fe-4S] cluster site is built by cysteine 562 and cysteine 571. The next 2 helical transmembrane spans lie at 578 to 599 (HVFLGLFWMYNSLSIVIFHFSW) and 653 to 675 (LSAYGIMFLAGHFVFAFSLMFLF). Residue histidine 664 participates in chlorophyll a' binding. 2 residues coordinate chlorophyll a: methionine 672 and tyrosine 680. Residue tryptophan 681 coordinates phylloquinone. A helical membrane pass occupies residues 713 to 733 (AVGVAHYLLGGIVTTWAFFLA).

Belongs to the PsaA/PsaB family. The PsaA/B heterodimer binds the P700 chlorophyll special pair and subsequent electron acceptors. PSI consists of a core antenna complex that captures photons, and an electron transfer chain that converts photonic excitation into a charge separation. The cyanobacterial PSI reaction center is composed of one copy each of PsaA,B,C,D,E,F,I,J,K,L,M and X, and forms trimeric complexes. Requires PSI electron transfer chain: 5 chlorophyll a, 1 chlorophyll a', 2 phylloquinones and 3 4Fe-4S clusters. PSI core antenna: 90 chlorophyll a, 22 carotenoids, 3 phospholipids and 1 galactolipid. P700 is a chlorophyll a/chlorophyll a' dimer, A0 is one or more chlorophyll a, A1 is one or both phylloquinones and FX is a shared 4Fe-4S iron-sulfur center. as cofactor.

It is found in the cellular thylakoid membrane. It carries out the reaction reduced [plastocyanin] + hnu + oxidized [2Fe-2S]-[ferredoxin] = oxidized [plastocyanin] + reduced [2Fe-2S]-[ferredoxin]. PsaA and PsaB bind P700, the primary electron donor of photosystem I (PSI), as well as the electron acceptors A0, A1 and FX. PSI is a plastocyanin/cytochrome c6-ferredoxin oxidoreductase, converting photonic excitation into a charge separation, which transfers an electron from the donor P700 chlorophyll pair to the spectroscopically characterized acceptors A0, A1, FX, FA and FB in turn. Oxidized P700 is reduced on the lumenal side of the thylakoid membrane by plastocyanin or cytochrome c6. In Picosynechococcus sp. (strain ATCC 27264 / PCC 7002 / PR-6) (Agmenellum quadruplicatum), this protein is Photosystem I P700 chlorophyll a apoprotein A1.